A 479-amino-acid polypeptide reads, in one-letter code: Catalase easC (479 aa).

The segment covering 1–13 (MASQVSLTAQGSG) has biased composition (polar residues). The disordered stretch occupies residues 1-28 (MASQVSLTAQGSGLSAPLNGPEHLTSTT). The active site involves H53. Y343 is a heme binding site. The interval 365–385 (HAANDAPKTKKPAVPLQKQSR) is disordered.

The protein belongs to the catalase family. Heme is required as a cofactor.

It participates in alkaloid biosynthesis; ergot alkaloid biosynthesis. Functionally, catalase; part of the gene cluster that mediates the biosynthesis of fungal ergot alkaloid. DmaW catalyzes the first step of ergot alkaloid biosynthesis by condensing dimethylallyl diphosphate (DMAP) and tryptophan to form 4-dimethylallyl-L-tryptophan. The second step is catalyzed by the methyltransferase easF that methylates 4-dimethylallyl-L-tryptophan in the presence of S-adenosyl-L-methionine, resulting in the formation of 4-dimethylallyl-L-abrine. The catalase easC and the FAD-dependent oxidoreductase easE then transform 4-dimethylallyl-L-abrine to chanoclavine-I which is further oxidized by easD in the presence of NAD(+), resulting in the formation of chanoclavine-I aldehyde. Agroclavine dehydrogenase easG then mediates the conversion of chanoclavine-I aldehyde to agroclavine via a non-enzymatic adduct reaction: the substrate is an iminium intermediate that is formed spontaneously from chanoclavine-I aldehyde in the presence of glutathione. Further conversion of agroclavine to paspalic acid is a two-step process involving oxidation of agroclavine to elymoclavine and of elymoclavine to paspalic acid, the second step being performed by the elymoclavine oxidase cloA. However, cloA does not encode a functional enzyme indicating that C.fusiformis terminates its ergot alkaloid pathway at elymoclavine. The polypeptide is Catalase easC (Claviceps fusiformis (Ergot fungus)).